The chain runs to 358 residues: DnaJ homolog subfamily B member 11 (358 aa).

Positions 1 to 22 (MAPQNLSTFCLLLLYLIGTVIA) are cleaved as a signal peptide. The 66-residue stretch at 25-90 (DFYKILGVPR…EKRKQYDTYG (66 aa)) folds into the J domain. Residue Thr188 is modified to Phosphothreonine. N-linked (GlcNAc...) asparagine glycosylation occurs at Asn261.

In terms of assembly, part of a large chaperone multiprotein complex comprising DNAJB11, HSP90B1, HSPA5, HYOU, PDIA2, PDIA4, PDIA6, PPIB, SDF2L1, UGGT1 and very small amounts of ERP29, but not, or at very low levels, CALR nor CANX. Binds to denatured substrates in an ATP-independent manner. Interacts via the J domain with HSPA5 in an ATP-dependent manner. In terms of processing, contains high-mannose Endo H-sensitive carbohydrates. Cys-169, Cys-171, Cys-193 and Cys-196 form intramolecular disulfide bonds. The preferential partner for each Cys is not known.

The protein localises to the endoplasmic reticulum lumen. In terms of biological role, as a co-chaperone for HSPA5 it is required for proper folding, trafficking or degradation of proteins. Binds directly to both unfolded proteins that are substrates for ERAD and nascent unfolded peptide chains, but dissociates from the HSPA5-unfolded protein complex before folding is completed. May help recruiting HSPA5 and other chaperones to the substrate. Stimulates HSPA5 ATPase activity. It is necessary for maturation and correct trafficking of PKD1. The protein is DnaJ homolog subfamily B member 11 (Dnajb11) of Mus musculus (Mouse).